A 237-amino-acid chain; its full sequence is NAD-dependent protein deacetylase (237 aa).

In terms of domain architecture, Deacetylase sirtuin-type spans 1–237 (MLTTWLTEAK…LEETNRALQA (237 aa)). NAD(+)-binding residues include A18, T22, F29, R30, Q95, D98, and H113. F29 is a binding site for nicotinamide. D98 contacts nicotinamide. H113 serves as the catalytic Proton acceptor. The Zn(2+) site is built by C121, C124, C140, and C142. Positions 180, 181, 205, and 224 each coordinate NAD(+).

It belongs to the sirtuin family. Class U subfamily. It depends on Zn(2+) as a cofactor.

Its subcellular location is the cytoplasm. The enzyme catalyses N(6)-acetyl-L-lysyl-[protein] + NAD(+) + H2O = 2''-O-acetyl-ADP-D-ribose + nicotinamide + L-lysyl-[protein]. NAD-dependent protein deacetylase which modulates the activities of several enzymes which are inactive in their acetylated form. The chain is NAD-dependent protein deacetylase from Halalkalibacterium halodurans (strain ATCC BAA-125 / DSM 18197 / FERM 7344 / JCM 9153 / C-125) (Bacillus halodurans).